Reading from the N-terminus, the 245-residue chain is Exosome complex component RRP41 (245 aa).

The residue at position 2 (alanine 2) is an N-acetylalanine.

Belongs to the RNase PH family. As to quaternary structure, component of the RNA exosome core complex (Exo-9), composed of EXOSC1, EXOSC2, EXOSC3, EXOSC4, EXOSC5, EXOSC6, EXOSC7, EXOSC8 and EXOSC9; within the complex interacts with EXOSC2, EXOSC7 and EXOSC9. The catalytically inactive RNA exosome core complex (Exo-9) associates with the catalytic subunit EXOSC10/RRP6. Exo-9 may associate with DIS3 to form the nucleolar exosome complex, or DIS3L to form the cytoplasmic exosome complex. Exo-9 is formed by a hexameric base ring consisting of the heterodimers EXOSC4-EXOSC9, EXOSC5-EXOSC8 and EXOSC6-EXOSC7, and a cap ring consisting of EXOSC1, EXOSC2 and EXOSC3. The RNA exosome complex associates with cofactors C1D/RRP47, MPHOSPH6/MPP6 and MTREX/MTR4. Interacts with DDX60. Interacts with DIS3; the interaction is direct.

It is found in the cytoplasm. Its subcellular location is the nucleus. The protein localises to the nucleolus. It localises to the nucleoplasm. Non-catalytic component of the RNA exosome complex which has 3'-&gt;5' exoribonuclease activity and participates in a multitude of cellular RNA processing and degradation events. In the nucleus, the RNA exosome complex is involved in proper maturation of stable RNA species such as rRNA, snRNA and snoRNA, in the elimination of RNA processing by-products and non-coding 'pervasive' transcripts, such as antisense RNA species and promoter-upstream transcripts (PROMPTs), and of mRNAs with processing defects, thereby limiting or excluding their export to the cytoplasm. The RNA exosome may be involved in Ig class switch recombination (CSR) and/or Ig variable region somatic hypermutation (SHM) by targeting AICDA deamination activity to transcribed dsDNA substrates. In the cytoplasm, the RNA exosome complex is involved in general mRNA turnover and specifically degrades inherently unstable mRNAs containing AU-rich elements (AREs) within their 3' untranslated regions, and in RNA surveillance pathways, preventing translation of aberrant mRNAs. It seems to be involved in degradation of histone mRNA. The catalytic inactive RNA exosome core complex of 9 subunits (Exo-9) is proposed to play a pivotal role in the binding and presentation of RNA for ribonucleolysis, and to serve as a scaffold for the association with catalytic subunits and accessory proteins or complexes. EXOSC4 binds to ARE-containing RNAs. In Bos taurus (Bovine), this protein is Exosome complex component RRP41 (EXOSC4).